The primary structure comprises 323 residues: Beta-ketoacyl-[acyl-carrier-protein] synthase III (323 aa).

Active-site residues include C112 and H248. The segment at Q249–R253 is ACP-binding. The active site involves N278.

This sequence belongs to the thiolase-like superfamily. FabH family. In terms of assembly, homodimer.

It localises to the cytoplasm. It carries out the reaction malonyl-[ACP] + acetyl-CoA + H(+) = 3-oxobutanoyl-[ACP] + CO2 + CoA. It functions in the pathway lipid metabolism; fatty acid biosynthesis. Its function is as follows. Catalyzes the condensation reaction of fatty acid synthesis by the addition to an acyl acceptor of two carbons from malonyl-ACP. Catalyzes the first condensation reaction which initiates fatty acid synthesis and may therefore play a role in governing the total rate of fatty acid production. Possesses both acetoacetyl-ACP synthase and acetyl transacylase activities. Its substrate specificity determines the biosynthesis of branched-chain and/or straight-chain of fatty acids. The chain is Beta-ketoacyl-[acyl-carrier-protein] synthase III from Streptococcus agalactiae serotype Ia (strain ATCC 27591 / A909 / CDC SS700).